Here is a 619-residue protein sequence, read N- to C-terminus: DEAD-box ATP-dependent RNA helicase 35B (619 aa).

Low complexity-rich tracts occupy residues 1–10 (MAAAAAAAAA) and 49–58 (PPTTNAVAVA). A disordered region spans residues 1-72 (MAAAAAAAAA…PPRSTSSPAV (72 aa)). The Q motif motif lies at 173–201 (RSFGDLRLPEPILRALRGKGIEKPTPIQV). The Helicase ATP-binding domain maps to 204 to 388 (LPVALSGRDM…KSALVKPIIV (185 aa)). Residue 217–224 (AFTGSGKT) coordinates ATP. Positions 336–339 (DEAD) match the DEAD box motif. The region spanning 399–559 (DVIQEVEYVK…RLPPILADLD (161 aa)) is the Helicase C-terminal domain. The segment at 576–593 (KGCAFCGGLGHRIEACPK) adopts a CCHC-type zinc-finger fold.

It belongs to the DEAD box helicase family. DDX41 subfamily.

The enzyme catalyses ATP + H2O = ADP + phosphate + H(+). In Oryza sativa subsp. japonica (Rice), this protein is DEAD-box ATP-dependent RNA helicase 35B.